The primary structure comprises 231 residues: Small ribosomal subunit protein uS3 (231 aa).

The KH type-2 domain occupies 39-107 (IRKYIVENLP…DVKLNIVEIR (69 aa)).

Belongs to the universal ribosomal protein uS3 family. As to quaternary structure, part of the 30S ribosomal subunit. Forms a tight complex with proteins S10 and S14.

In terms of biological role, binds the lower part of the 30S subunit head. Binds mRNA in the 70S ribosome, positioning it for translation. The chain is Small ribosomal subunit protein uS3 from Novosphingobium aromaticivorans (strain ATCC 700278 / DSM 12444 / CCUG 56034 / CIP 105152 / NBRC 16084 / F199).